The primary structure comprises 314 residues: Lipoyl synthase (314 aa).

[4Fe-4S] cluster is bound by residues cysteine 67, cysteine 72, cysteine 78, cysteine 93, cysteine 97, cysteine 100, and serine 306. Residues 79–295 (FNRGTATFMI…KNYALSIGFK (217 aa)) enclose the Radical SAM core domain.

It belongs to the radical SAM superfamily. Lipoyl synthase family. [4Fe-4S] cluster serves as cofactor.

It localises to the cytoplasm. It carries out the reaction [[Fe-S] cluster scaffold protein carrying a second [4Fe-4S](2+) cluster] + N(6)-octanoyl-L-lysyl-[protein] + 2 oxidized [2Fe-2S]-[ferredoxin] + 2 S-adenosyl-L-methionine + 4 H(+) = [[Fe-S] cluster scaffold protein] + N(6)-[(R)-dihydrolipoyl]-L-lysyl-[protein] + 4 Fe(3+) + 2 hydrogen sulfide + 2 5'-deoxyadenosine + 2 L-methionine + 2 reduced [2Fe-2S]-[ferredoxin]. Its pathway is protein modification; protein lipoylation via endogenous pathway; protein N(6)-(lipoyl)lysine from octanoyl-[acyl-carrier-protein]: step 2/2. Catalyzes the radical-mediated insertion of two sulfur atoms into the C-6 and C-8 positions of the octanoyl moiety bound to the lipoyl domains of lipoate-dependent enzymes, thereby converting the octanoylated domains into lipoylated derivatives. This is Lipoyl synthase from Buchnera aphidicola subsp. Baizongia pistaciae (strain Bp).